Consider the following 312-residue polypeptide: NADH-ubiquinone oxidoreductase chain 1 (312 aa).

8 consecutive transmembrane segments (helical) span residues 3–23 (FILSLIGSLLLIICVLVSVAF), 77–97 (ISPIFSLFLSLFVWMCMPFFV), 104–124 (LGGLFFLCCTSLGVYTVMVAG), 150–170 (LALILLSFVFLIGSYNMVYFF), 174–194 (IYVWFLIILFPMALVWLTISL), 226–246 (LIFMAEYASILFMSMLFCVIF), 250–270 (DVFNLLFYVKLTFISFIFIWA), and 289–309 (CFLSFSLNYLLFFIGFKILLF).

It belongs to the complex I subunit 1 family.

It is found in the mitochondrion inner membrane. The catalysed reaction is a ubiquinone + NADH + 5 H(+)(in) = a ubiquinol + NAD(+) + 4 H(+)(out). Its function is as follows. Core subunit of the mitochondrial membrane respiratory chain NADH dehydrogenase (Complex I) that is believed to belong to the minimal assembly required for catalysis. Complex I functions in the transfer of electrons from NADH to the respiratory chain. The immediate electron acceptor for the enzyme is believed to be ubiquinone. The protein is NADH-ubiquinone oxidoreductase chain 1 (mt:ND1) of Drosophila subobscura (Fruit fly).